We begin with the raw amino-acid sequence, 208 residues long: Superoxide dismutase [Mn] 2 (208 aa).

Residues H28, H83, D165, and H169 each contribute to the Mn(2+) site.

Belongs to the iron/manganese superoxide dismutase family. In terms of assembly, homodimer. Mn(2+) serves as cofactor.

It catalyses the reaction 2 superoxide + 2 H(+) = H2O2 + O2. Destroys superoxide anion radicals which are normally produced within the cells and which are toxic to biological systems. The sequence is that of Superoxide dismutase [Mn] 2 (sodA2) from Bacillus cereus (strain ATCC 14579 / DSM 31 / CCUG 7414 / JCM 2152 / NBRC 15305 / NCIMB 9373 / NCTC 2599 / NRRL B-3711).